The primary structure comprises 372 residues: MGVKGLNQLIKEHSPSAYKEFQLKNLFGRKVAIDASMCLYQFLIAVRQSDGQQLTNEDGETTSHLSGMFYRTIKMVENNIKPVYVFDGKPPVLKGGELEKRLLRREEAQKQKTALGDEGTVEEVLKFEKRLVRVTREQNEEAKKLLELMGIPCVDAPCEAEAQCAELARGGKVYAAASEDMDTLCYEPPFLLRHLTFSEARKMPIDQIEYKDAIAGLDMTKEQFIDLCILLGCDYCESIKGIGQATAFKLIKEHGSLDNIVEWIKNNKTKYTLPENWPYDEARQLFMNPEVTNANEISLKWKEPDVDGLIEFMVRQKGFSEDRIRSGAEKLKKGLKGGVQGRLDGFFKVVKNDDKKRKADPKETKSSKKKRR.

Residues 1–105 form an N-domain region; that stretch reads MGVKGLNQLI…GELEKRLLRR (105 aa). D34 is a Mg(2+) binding site. 2 residues coordinate DNA: R47 and R71. Residues D87, E159, E161, D180, and D182 each contribute to the Mg(2+) site. Positions 123–254 are I-domain; that stretch reads EVLKFEKRLV…ATAFKLIKEH (132 aa). E159 lines the DNA pocket. The DNA site is built by G232 and D234. D234 is a binding site for Mg(2+). Residues 339 to 347 are interaction with PCNA; that stretch reads VQGRLDGFF.

This sequence belongs to the XPG/RAD2 endonuclease family. FEN1 subfamily. As to quaternary structure, interacts with PCNA. Three molecules of RAD27 bind to one PCNA trimer with each molecule binding to one PCNA monomer. PCNA stimulates the nuclease activity without altering cleavage specificity. Requires Mg(2+) as cofactor. In terms of processing, phosphorylated. Phosphorylation upon DNA damage induces relocalization to the nuclear plasma.

It localises to the nucleus. The protein resides in the nucleolus. The protein localises to the nucleoplasm. It is found in the mitochondrion. Functionally, structure-specific nuclease with 5'-flap endonuclease and 5'-3' exonuclease activities involved in DNA replication and repair. During DNA replication, cleaves the 5'-overhanging flap structure that is generated by displacement synthesis when DNA polymerase encounters the 5'-end of a downstream Okazaki fragment. It enters the flap from the 5'-end and then tracks to cleave the flap base, leaving a nick for ligation. Also involved in the long patch base excision repair (LP-BER) pathway, by cleaving within the apurinic/apyrimidinic (AP) site-terminated flap. Acts as a genome stabilization factor that prevents flaps from equilibrating into structures that lead to duplications and deletions. Also possesses 5'-3' exonuclease activity on nicked or gapped double-stranded DNA, and exhibits RNase H activity. Also involved in replication and repair of rDNA and in repairing mitochondrial DNA. This is Flap endonuclease 1 from Candida dubliniensis (strain CD36 / ATCC MYA-646 / CBS 7987 / NCPF 3949 / NRRL Y-17841) (Yeast).